A 190-amino-acid polypeptide reads, in one-letter code: Putative manganese efflux pump MntP (190 aa).

The next 6 membrane-spanning stretches (helical) occupy residues 3–23, 37–57, 72–88, 111–131, 138–158, and 164–184; these read FLQISLLSIGVAADAFACSVV, LVLAGIFGVFQAAMPLIGWFI, HWIAFALLGIVGTKMIW, IILGLATSIDALAVGMGLAFV, VALSMGSITFALSLAGAWIGH, and FGKWATILGGIILIGIGANIV.

This sequence belongs to the MntP (TC 9.B.29) family.

The protein localises to the cell membrane. Its function is as follows. Probably functions as a manganese efflux pump. The protein is Putative manganese efflux pump MntP of Corynebacterium glutamicum (strain ATCC 13032 / DSM 20300 / JCM 1318 / BCRC 11384 / CCUG 27702 / LMG 3730 / NBRC 12168 / NCIMB 10025 / NRRL B-2784 / 534).